A 197-amino-acid chain; its full sequence is MQLKRVAEAKLPTPWGDFLMVGFEEIATGHDHLALVYGDISGSVPVLARVHSECLTGDALFSLRCDCGFQLEAALGHIAEEGRGVLLYHRQEGRNIGLLNKIRAYALQDLGADTVEANHQLGFAADERDFTLCADMFKLLDVDEVRLLTNNPQKVKILNEAGINIVERVPLIVGRNPKNEHYLATKAAKMGHILDMK.

49 to 53 (RVHSE) lines the GTP pocket. The Zn(2+) site is built by cysteine 54, cysteine 65, and cysteine 67. GTP-binding positions include glutamine 70, 92 to 94 (EGR), and threonine 114. The active-site Proton acceptor is aspartate 126. Residue arginine 128 is the Nucleophile of the active site. 2 residues coordinate GTP: threonine 149 and lysine 154.

This sequence belongs to the GTP cyclohydrolase II family. Homodimer. Zn(2+) serves as cofactor.

The enzyme catalyses GTP + 4 H2O = 2,5-diamino-6-hydroxy-4-(5-phosphoribosylamino)-pyrimidine + formate + 2 phosphate + 3 H(+). Its pathway is cofactor biosynthesis; riboflavin biosynthesis; 5-amino-6-(D-ribitylamino)uracil from GTP: step 1/4. Its function is as follows. Catalyzes the conversion of GTP to 2,5-diamino-6-ribosylamino-4(3H)-pyrimidinone 5'-phosphate (DARP), formate and pyrophosphate. The protein is GTP cyclohydrolase-2 of Pectobacterium atrosepticum (strain SCRI 1043 / ATCC BAA-672) (Erwinia carotovora subsp. atroseptica).